Reading from the N-terminus, the 37-residue chain is Large ribosomal subunit protein bL36 (37 aa).

The protein belongs to the bacterial ribosomal protein bL36 family.

This chain is Large ribosomal subunit protein bL36, found in Streptomyces avermitilis (strain ATCC 31267 / DSM 46492 / JCM 5070 / NBRC 14893 / NCIMB 12804 / NRRL 8165 / MA-4680).